A 234-amino-acid chain; its full sequence is Probable plastid-lipid-associated protein 5, chloroplastic (234 aa).

The transit peptide at 1–45 directs the protein to the chloroplast; it reads MALPWCLKTGVLTSPAAGFNHPSDSGFAVPTKLLSIRKGDRERLR.

Belongs to the PAP/fibrillin family.

The protein resides in the plastid. It localises to the chloroplast thylakoid. The chain is Probable plastid-lipid-associated protein 5, chloroplastic (PAP5) from Arabidopsis thaliana (Mouse-ear cress).